The primary structure comprises 468 residues: Keratin, type I cytoskeletal 26 (468 aa).

The segment at 1 to 82 (MSFRLSGGSR…GNEHSLLSGN (82 aa)) is head. Residues 83-118 (EKVTMQNLNDRLASYLDHVHALEEANADLEQKIKGW) form a coil 1A region. The IF rod domain occupies 83–398 (EKVTMQNLND…NLLDGEERKS (316 aa)). A linker 1 region spans residues 119–140 (YEKCEPGSSREHDHDYSRYFSV). Residues 141 to 232 (IEDLKRQIIS…KSHEEEMEVL (92 aa)) are coil 1B. Residues 233–255 (QYTAGGNVNVEMNATPGVDLTVL) are linker 12. Positions 256-394 (LNNMRAEYED…DIYCNLLDGE (139 aa)) are coil 2. The interval 395 to 465 (ERKSKSTCYK…NITVEQRVPS (71 aa)) is tail.

Belongs to the intermediate filament family. In terms of assembly, heterotetramer of two type I and two type II keratins. In terms of tissue distribution, strongly expressed in skin and scalp, and weak expression observed in thymus and tongue. In the hair follicle, expression is restricted to the mid- to upper inner root sheath cuticle, being present slightly above the apex of the dermal papilla (at protein level).

This Homo sapiens (Human) protein is Keratin, type I cytoskeletal 26.